The chain runs to 317 residues: MIIMKLIFLGTGAAVPSKNRNHIGIAFKFGGEVFLFDCGENIQRQMLFTEVSPMKINHIFITHLHGDHILGIPGLLQSMGFFGREKELKIFGPEGTKEIIENSLKLGTHYIEFPIKVYEIYTKEPITIYKEENYEIIAYPTEHGIPSYAYIFKEIKKPRLDIEKAKKLGVKIGPDLKKLKNGEAVKNIYGEIIKPEYVLLPPKKGFCLAYSGDTLPLEDFGKYLKELGCDVLIHEATFDDSAKDAAKENMHSTIGDAVNIAKLANVKALILTHISARYDKEEYFNLYKMNVKQYNESFKIIISEDLKSYDIKKDLLG.

Residues His63, His65, Asp67, His68, His143, Asp213, and His273 each coordinate Zn(2+). Asp67 serves as the catalytic Proton acceptor.

This sequence belongs to the RNase Z family. Homodimer. Requires Zn(2+) as cofactor.

It catalyses the reaction Endonucleolytic cleavage of RNA, removing extra 3' nucleotides from tRNA precursor, generating 3' termini of tRNAs. A 3'-hydroxy group is left at the tRNA terminus and a 5'-phosphoryl group is left at the trailer molecule.. Functionally, zinc phosphodiesterase, which displays some tRNA 3'-processing endonuclease activity. Probably involved in tRNA maturation, by removing a 3'-trailer from precursor tRNA. The chain is Ribonuclease Z from Methanocaldococcus jannaschii (strain ATCC 43067 / DSM 2661 / JAL-1 / JCM 10045 / NBRC 100440) (Methanococcus jannaschii).